The primary structure comprises 387 residues: Fetuin-B (387 aa).

Residues 1-18 (MNVLLLLVLCTLAMGCGA) form the signal peptide. Cystatin fetuin-B-type domains are found at residues 25 to 139 (AARP…YNCT) and 150 to 258 (MTCP…VTCS). A glycan (N-linked (GlcNAc...) asparagine) is linked at N37. Intrachain disulfides connect C94–C105, C118–C138, C152–C155, C217–C225, and C238–C257. N137 is a glycosylation site (N-linked (GlcNAc...) asparagine). Positions 264-306 (APTPRGENATVNQRPANPSKTEELQQQNTAPTNSPTKAVPKGS) are disordered. N-linked (GlcNAc...) asparagine glycosylation is present at N271. Polar residues predominate over residues 272-299 (ATVNQRPANPSKTEELQQQNTAPTNSPT). Residues T292 and T295 are each glycosylated (O-linked (GalNAc...) threonine). S320 carries the post-translational modification Phosphoserine. The interval 366–387 (KEQRSAECPGPAQKGYPFILPS) is disordered.

This sequence belongs to the fetuin family. Liver and testis.

It is found in the secreted. In terms of biological role, protease inhibitor required for egg fertilization. Required to prevent premature zona pellucida hardening before fertilization, probably by inhibiting the protease activity of ASTL, a protease that mediates the cleavage of ZP2 and triggers zona pellucida hardening. This is Fetuin-B (FETUB) from Bos taurus (Bovine).